The sequence spans 447 residues: Cobyrinate a,c-diamide synthase (447 aa).

The 188-residue stretch at 252–439 (KIAVAFDESF…AHQHCIGNPY (188 aa)) folds into the GATase cobBQ-type domain. C331 (nucleophile) is an active-site residue.

It belongs to the CobB/CbiA family. The cofactor is Mg(2+).

The enzyme catalyses cob(II)yrinate + 2 L-glutamine + 2 ATP + 2 H2O = cob(II)yrinate a,c diamide + 2 L-glutamate + 2 ADP + 2 phosphate + 2 H(+). The catalysed reaction is Ni-sirohydrochlorin + 2 L-glutamine + 2 ATP + 2 H2O = Ni-sirohydrochlorin a,c-diamide + 2 L-glutamate + 2 ADP + 2 phosphate + 2 H(+). It functions in the pathway cofactor biosynthesis; adenosylcobalamin biosynthesis; cob(II)yrinate a,c-diamide from sirohydrochlorin (anaerobic route): step 10/10. Catalyzes the ATP-dependent amidation of the two carboxylate groups at positions a and c of cobyrinate, using either L-glutamine or ammonia as the nitrogen source. Involved in the biosynthesis of the unique nickel-containing tetrapyrrole coenzyme F430, the prosthetic group of methyl-coenzyme M reductase (MCR), which plays a key role in methanogenesis and anaerobic methane oxidation. Catalyzes the ATP-dependent amidation of the two carboxylate groups at positions a and c of Ni-sirohydrochlorin, using L-glutamine or ammonia as the nitrogen source. In Methanococcus maripaludis (strain C7 / ATCC BAA-1331), this protein is Cobyrinate a,c-diamide synthase.